We begin with the raw amino-acid sequence, 727 residues long: Catalase-peroxidase (727 aa).

The segment at 1-26 is disordered; sequence MDTKVETGGKCPVAHGPAGAKGRGNR. Residues 97-219 constitute a cross-link (tryptophyl-tyrosyl-methioninium (Trp-Tyr) (with M-245)); the sequence is WHSAGTYRIT…LGAVQMGLIY (123 aa). The active-site Proton acceptor is the H98. The tryptophyl-tyrosyl-methioninium (Tyr-Met) (with W-97) cross-link spans 219 to 245; sequence YVNPEGPNGNPDPIAAARDIRETFSRM. Heme b is bound at residue H260.

This sequence belongs to the peroxidase family. Peroxidase/catalase subfamily. In terms of assembly, homodimer or homotetramer. Heme b serves as cofactor. Formation of the three residue Trp-Tyr-Met cross-link is important for the catalase, but not the peroxidase activity of the enzyme.

The enzyme catalyses H2O2 + AH2 = A + 2 H2O. It catalyses the reaction 2 H2O2 = O2 + 2 H2O. In terms of biological role, bifunctional enzyme with both catalase and broad-spectrum peroxidase activity. The protein is Catalase-peroxidase of Allorhizobium ampelinum (strain ATCC BAA-846 / DSM 112012 / S4) (Agrobacterium vitis (strain S4)).